We begin with the raw amino-acid sequence, 354 residues long: Guanine nucleotide-binding protein G(o) subunit alpha (354 aa).

Residue G2 is the site of N-myristoyl glycine attachment. A lipid anchor (S-palmitoyl cysteine) is attached at C3. A G-alpha domain is found at 32–354; the sequence is KDIKLLLLGA…ANNLRGCGLY (323 aa). The G1 motif stretch occupies residues 35–48; the sequence is KLLLLGAGESGKST. Residues 40–47, 176–182, 201–205, 270–273, and A326 contribute to the GTP site; these read GAGESGKS, LRTRVKT, DVGGQ, and NKKD. Mg(2+) is bound by residues S47 and T182. Positions 174–182 are G2 motif; it reads DILRTRVKT. Residues 197–206 form a G3 motif region; that stretch reads FKLFDVGGQR. Residues 266–273 form a G4 motif region; that stretch reads ILFLNKKD. Residues 324 to 329 are G5 motif; it reads TCATDT.

It belongs to the G-alpha family. G(i/o/t/z) subfamily. In terms of assembly, g proteins are composed of 3 units; alpha, beta and gamma. The alpha chain contains the guanine nucleotide binding site.

In terms of biological role, guanine nucleotide-binding proteins (G proteins) are involved as modulators or transducers in various transmembrane signaling systems. The G(o) protein function is not clear. The chain is Guanine nucleotide-binding protein G(o) subunit alpha from Planorbella trivolvis (Marsh rams-horn).